The sequence spans 1396 residues: Probable ATP-dependent RNA helicase spindle-E (1396 aa).

A disordered region spans residues 1–34 (MDEAAGPSTSRTSNLEDVDDEGASLAEEDEEHTK). The segment covering 16–30 (EDVDDEGASLAEEDE) has biased composition (acidic residues). The Helicase ATP-binding domain occupies 68 to 234 (LDKIRSNAVV…FKIPKKSGYL (167 aa)). 81–88 (GATGCGKT) is a binding site for ATP. The DEAH box signature appears at 180 to 183 (DEVH). In terms of domain architecture, Helicase C-terminal spans 292 to 468 (KGQEFGDSLE…TVVLKAKLLE (177 aa)). Residues 885–950 (NFAMGQMVAA…RQLDDSLGQL (66 aa)) form the Tudor domain.

The protein belongs to the DEAD box helicase family. DEAH subfamily.

The protein resides in the cytoplasm. The catalysed reaction is ATP + H2O = ADP + phosphate + H(+). Probable ATP-binding RNA helicase which plays a central role during gametogenesis by repressing transposable elements and preventing their mobilization, which is essential for the germline integrity. Acts via the piRNA metabolic process, which mediates the repression of transposable elements during meiosis by forming complexes composed of piRNAs and Piwi proteins and govern the methylation and subsequent repression of transposons. The polypeptide is Probable ATP-dependent RNA helicase spindle-E (spn-E) (Culex quinquefasciatus (Southern house mosquito)).